We begin with the raw amino-acid sequence, 369 residues long: tRNA-specific 2-thiouridylase MnmA (369 aa).

Residues 12–19 and M38 each bind ATP; that span reads GMSGGVDS. The tract at residues 98 to 100 is interaction with target base in tRNA; sequence NPD. The active-site Nucleophile is the C103. A disulfide bond links C103 and C200. G128 serves as a coordination point for ATP. Positions 150–152 are interaction with tRNA; that stretch reads KDQ. C200 serves as the catalytic Cysteine persulfide intermediate. The tract at residues 312 to 313 is interaction with tRNA; it reads RY.

This sequence belongs to the MnmA/TRMU family. In terms of assembly, interacts with TusE.

It is found in the cytoplasm. The catalysed reaction is S-sulfanyl-L-cysteinyl-[protein] + uridine(34) in tRNA + AH2 + ATP = 2-thiouridine(34) in tRNA + L-cysteinyl-[protein] + A + AMP + diphosphate + H(+). Functionally, catalyzes the 2-thiolation of uridine at the wobble position (U34) of tRNA(Lys), tRNA(Glu) and tRNA(Gln), leading to the formation of s(2)U34, the first step of tRNA-mnm(5)s(2)U34 synthesis. Sulfur is provided by IscS, via a sulfur-relay system. Binds ATP and its substrate tRNAs. The polypeptide is tRNA-specific 2-thiouridylase MnmA (Sodalis glossinidius (strain morsitans)).